The following is a 930-amino-acid chain: Isoleucine--tRNA ligase (930 aa).

Residues 57 to 67 (PYANGHIHLGT) carry the 'HIGH' region motif. E559 provides a ligand contact to L-isoleucyl-5'-AMP. The short motif at 600 to 604 (KMSKS) is the 'KMSKS' region element. K603 provides a ligand contact to ATP. Zn(2+)-binding residues include C899, C902, C918, and C921.

This sequence belongs to the class-I aminoacyl-tRNA synthetase family. IleS type 1 subfamily. Monomer. Zn(2+) is required as a cofactor.

Its subcellular location is the cytoplasm. The enzyme catalyses tRNA(Ile) + L-isoleucine + ATP = L-isoleucyl-tRNA(Ile) + AMP + diphosphate. Catalyzes the attachment of isoleucine to tRNA(Ile). As IleRS can inadvertently accommodate and process structurally similar amino acids such as valine, to avoid such errors it has two additional distinct tRNA(Ile)-dependent editing activities. One activity is designated as 'pretransfer' editing and involves the hydrolysis of activated Val-AMP. The other activity is designated 'posttransfer' editing and involves deacylation of mischarged Val-tRNA(Ile). The sequence is that of Isoleucine--tRNA ligase from Desulforudis audaxviator (strain MP104C).